A 250-amino-acid chain; its full sequence is uncharacterized protein (250 aa).

Residues histidine 182–alanine 205 form a disordered region. Residues threonine 190–proline 201 are compositionally biased toward pro residues. A helical transmembrane segment spans residues threonine 230–leucine 250.

It belongs to the ascovirus HvAV ORF18 family.

The protein localises to the membrane. This is an uncharacterized protein from Spodoptera frugiperda ascovirus 1a (SfAV-1a).